The following is a 335-amino-acid chain: Biotin synthase (335 aa).

A Radical SAM core domain is found at 43–269 (YFGKKVKLNM…INPTKEIRIA (227 aa)). Residues Cys61, Cys65, and Cys68 each contribute to the [4Fe-4S] cluster site. Residues Cys104, Cys137, Cys197, and Arg267 each coordinate [2Fe-2S] cluster.

Belongs to the radical SAM superfamily. Biotin synthase family. In terms of assembly, homodimer. The cofactor is [4Fe-4S] cluster. [2Fe-2S] cluster serves as cofactor.

It carries out the reaction (4R,5S)-dethiobiotin + (sulfur carrier)-SH + 2 reduced [2Fe-2S]-[ferredoxin] + 2 S-adenosyl-L-methionine = (sulfur carrier)-H + biotin + 2 5'-deoxyadenosine + 2 L-methionine + 2 oxidized [2Fe-2S]-[ferredoxin]. It functions in the pathway cofactor biosynthesis; biotin biosynthesis; biotin from 7,8-diaminononanoate: step 2/2. Functionally, catalyzes the conversion of dethiobiotin (DTB) to biotin by the insertion of a sulfur atom into dethiobiotin via a radical-based mechanism. This chain is Biotin synthase, found in Staphylococcus aureus (strain MRSA252).